The sequence spans 529 residues: Ribonuclease Y (529 aa).

A helical membrane pass occupies residues 4-24; that stretch reads GLIYISLEVIVACLISALAMY. In terms of domain architecture, KH spans 216–297; that stretch reads FTNRIALPCS…NRIEEVYHRV (82 aa). The HD domain maps to 342 to 435; that stretch reads ALQHSKEVAL…VCAADALSAG (94 aa).

The protein belongs to the RNase Y family.

The protein localises to the cell membrane. Endoribonuclease that initiates mRNA decay. The chain is Ribonuclease Y from Helicobacter acinonychis (strain Sheeba).